Reading from the N-terminus, the 192-residue chain is Phosphoheptose isomerase (192 aa).

The SIS domain occupies 35 to 192; that stretch reads LIETLENQGK…CIERHFAHKN (158 aa). 50 to 52 provides a ligand contact to substrate; that stretch reads NGG. Positions 59 and 63 each coordinate Zn(2+). Substrate-binding positions include glutamate 63, 92–93, 118–120, serine 123, and glutamine 170; these read ND and STS. Glutamine 170 and histidine 178 together coordinate Zn(2+).

This sequence belongs to the SIS family. GmhA subfamily. Homotetramer. It depends on Zn(2+) as a cofactor.

It is found in the cytoplasm. It carries out the reaction 2 D-sedoheptulose 7-phosphate = D-glycero-alpha-D-manno-heptose 7-phosphate + D-glycero-beta-D-manno-heptose 7-phosphate. The protein operates within carbohydrate biosynthesis; D-glycero-D-manno-heptose 7-phosphate biosynthesis; D-glycero-alpha-D-manno-heptose 7-phosphate and D-glycero-beta-D-manno-heptose 7-phosphate from sedoheptulose 7-phosphate: step 1/1. Its function is as follows. Catalyzes the isomerization of sedoheptulose 7-phosphate in D-glycero-D-manno-heptose 7-phosphate. This is Phosphoheptose isomerase from Helicobacter pylori (strain P12).